We begin with the raw amino-acid sequence, 71 residues long: Large ribosomal subunit protein bL31 (71 aa).

Zn(2+)-binding residues include Cys16, Cys18, Cys37, and Cys40.

It belongs to the bacterial ribosomal protein bL31 family. Type A subfamily. In terms of assembly, part of the 50S ribosomal subunit. Zn(2+) serves as cofactor.

Functionally, binds the 23S rRNA. The protein is Large ribosomal subunit protein bL31 of Serratia proteamaculans (strain 568).